Consider the following 160-residue polypeptide: Competence protein ComGD (160 aa).

Residues A30–L50 traverse the membrane as a helical segment.

In terms of assembly, the transformation pili are flexible filaments, consisting mainly of the major pilin ComGC and smaller amounts of the minor pilins, including at least ComGD, ComGF and ComGG, and perhaps ComGE. Interacts with ComGE. Interacts with ComGF. Interacts with ComGG.

It localises to the cell membrane. The protein resides in the cell surface. It is found in the fimbrium. Required for formation of the type IV-like pilus (T4P) that plays a role in transformation. Transformation pili are dynamically extended and retracted, perhaps thereby promoting DNA uptake and transformation. Involved in transformation. Required for DNA binding. The polypeptide is Competence protein ComGD (Streptococcus pneumoniae (strain ATCC BAA-255 / R6)).